A 59-amino-acid polypeptide reads, in one-letter code: Large ribosomal subunit protein uL30 (59 aa).

This sequence belongs to the universal ribosomal protein uL30 family. As to quaternary structure, part of the 50S ribosomal subunit.

The chain is Large ribosomal subunit protein uL30 from Psychrobacter cryohalolentis (strain ATCC BAA-1226 / DSM 17306 / VKM B-2378 / K5).